Here is a 298-residue protein sequence, read N- to C-terminus: Bifunctional protein FolD (298 aa).

NADP(+) is bound by residues 165-167, Ser190, and Ile231; that span reads GRS.

This sequence belongs to the tetrahydrofolate dehydrogenase/cyclohydrolase family. Homodimer.

It carries out the reaction (6R)-5,10-methylene-5,6,7,8-tetrahydrofolate + NADP(+) = (6R)-5,10-methenyltetrahydrofolate + NADPH. It catalyses the reaction (6R)-5,10-methenyltetrahydrofolate + H2O = (6R)-10-formyltetrahydrofolate + H(+). Its pathway is one-carbon metabolism; tetrahydrofolate interconversion. Its function is as follows. Catalyzes the oxidation of 5,10-methylenetetrahydrofolate to 5,10-methenyltetrahydrofolate and then the hydrolysis of 5,10-methenyltetrahydrofolate to 10-formyltetrahydrofolate. The chain is Bifunctional protein FolD from Prochlorococcus marinus subsp. pastoris (strain CCMP1986 / NIES-2087 / MED4).